The sequence spans 400 residues: Na(+)/H(+) antiporter NhaA (400 aa).

The next 12 membrane-spanning stretches (helical) occupy residues 26–46, 71–91, 107–127, 137–157, 166–186, 189–209, 212–232, 233–253, 273–293, 299–319, 340–360, and 373–393; these read AGGILLLFSAVVAMLLANSPL, LIHWINDGFMAVFFVLVGMEV, IFPAIAAIGGMVIPAVVYWFI, GWAIPMATDIAFALGIMALLS, IFLLALAIIDDLGAIVVIALF, HGLSVQALIFSAVAIIALILL, FKVSALCAYMVVGAILWASVL, KSGVHATLAGVIIGFSIPLKG, FVILPLFAFANAGVSFAGIDV, PLLLAIASGLIIGKPVGIFGF, IFAVAVLCGIGFTMSMFLASL, and LSRLGILLGSTVSAILGYLFL.

It belongs to the NhaA Na(+)/H(+) (TC 2.A.33) antiporter family.

It is found in the cell inner membrane. It catalyses the reaction Na(+)(in) + 2 H(+)(out) = Na(+)(out) + 2 H(+)(in). In terms of biological role, na(+)/H(+) antiporter that extrudes sodium in exchange for external protons. The polypeptide is Na(+)/H(+) antiporter NhaA (Haemophilus influenzae (strain PittGG)).